A 192-amino-acid polypeptide reads, in one-letter code: Anthrone oxygenase (192 aa).

3 helical membrane passes run 12-32 (IVTG…TVPV), 54-74 (GHIS…YIAA), and 86-106 (AALV…VMSS). N-linked (GlcNAc...) asparagine glycosylation is found at Asn130, Asn138, and Asn147. Residues 172 to 192 (MHLVRSLFPLMAAVLGVGICV) form a helical membrane-spanning segment.

Belongs to the anthrone oxygenase family.

It localises to the membrane. It carries out the reaction emodin anthrone + O2 = emodin + H2O + H(+). Its pathway is secondary metabolite biosynthesis. Its function is as follows. Anthrone oxygenase; part of the gene cluster that mediates the biosynthesis of monodictyphenone, a prenyl xanthone derivative. The pathway begins with the synthesis of atrochrysone thioester by the polyketide synthase (PKS) mdpG. The atrochrysone carboxyl ACP thioesterase mdpF then breaks the thioester bond and releases the atrochrysone carboxylic acid from mdpG. The atrochrysone carboxylic acid is then converted to atrochrysone which is further transformed into emodin anthrone by mdpH-1 and mdpH-2. Emodin is further modified to yield monodictyphenone via several steps involving mdpB, mdpC mdpJ, mdpK and mdpL. These enzymes with xptA, xptB and xptC are also proposed to be involved in the synthesis of shamixanthone from emodin. Especially, direct reduction of emodin by the short chain dehydrogenase mdpC followed by dehydration catalyzed by the scytalone dehydratase-like protein mdpB gives loss of oxygen and formation of chrysophanol intermediate in two simple steps. In Emericella nidulans (strain FGSC A4 / ATCC 38163 / CBS 112.46 / NRRL 194 / M139) (Aspergillus nidulans), this protein is Anthrone oxygenase.